We begin with the raw amino-acid sequence, 149 residues long: Transcriptional repressor NrdR (149 aa).

A zinc finger lies at 3–34 (CPFCSAVDTKVIDSRLVGEGSQVRRRRQCLVC). The 91-residue stretch at 49 to 139 (PRVIKSNEVR…VYRSFEDIRE (91 aa)) folds into the ATP-cone domain.

Belongs to the NrdR family. Requires Zn(2+) as cofactor.

In terms of biological role, negatively regulates transcription of bacterial ribonucleotide reductase nrd genes and operons by binding to NrdR-boxes. The sequence is that of Transcriptional repressor NrdR from Pectobacterium carotovorum subsp. carotovorum (strain PC1).